Consider the following 574-residue polypeptide: DNA mismatch repair protein MutL (574 aa).

The protein belongs to the DNA mismatch repair MutL/HexB family.

Functionally, this protein is involved in the repair of mismatches in DNA. It is required for dam-dependent methyl-directed DNA mismatch repair. May act as a 'molecular matchmaker', a protein that promotes the formation of a stable complex between two or more DNA-binding proteins in an ATP-dependent manner without itself being part of a final effector complex. In Coxiella burnetii (strain Dugway 5J108-111), this protein is DNA mismatch repair protein MutL.